The following is a 163-amino-acid chain: Probable protein tyrosine phosphatase type IVA B (163 aa).

The Tyrosine-protein phosphatase domain maps to 10–161 (TIIESSTHKF…YKASKKAGCK (152 aa)). A disulfide bond links Cys-49 and Cys-104. The active-site Proton donor is the Asp-70. Residue Cys-104 is the Phosphocysteine intermediate of the active site. 105 to 110 (IAGLGR) is a phosphate binding site. Arg-110 is a substrate binding site. The residue at position 160 (Cys-160) is a Cysteine methyl ester. The S-farnesyl cysteine moiety is linked to residue Cys-160. Residues 161-163 (KIM) constitute a propeptide, removed in mature form.

Belongs to the protein-tyrosine phosphatase family.

Its subcellular location is the membrane. The catalysed reaction is O-phospho-L-tyrosyl-[protein] + H2O = L-tyrosyl-[protein] + phosphate. The polypeptide is Probable protein tyrosine phosphatase type IVA B (Dictyostelium discoideum (Social amoeba)).